The sequence spans 235 residues: Octanoyltransferase (235 aa).

A BPL/LPL catalytic domain is found at 59–235 (PGSSQAVWLL…KKSLTERFGL (177 aa)). Substrate is bound by residues 101–108 (RGGEVTHH), 168–170 (SIG), and 181–183 (GLS). Residue C199 is the Acyl-thioester intermediate of the active site.

This sequence belongs to the LipB family.

The protein localises to the cytoplasm. It carries out the reaction octanoyl-[ACP] + L-lysyl-[protein] = N(6)-octanoyl-L-lysyl-[protein] + holo-[ACP] + H(+). Its pathway is protein modification; protein lipoylation via endogenous pathway; protein N(6)-(lipoyl)lysine from octanoyl-[acyl-carrier-protein]: step 1/2. Its function is as follows. Catalyzes the transfer of endogenously produced octanoic acid from octanoyl-acyl-carrier-protein onto the lipoyl domains of lipoate-dependent enzymes. Lipoyl-ACP can also act as a substrate although octanoyl-ACP is likely to be the physiological substrate. In Prochlorococcus marinus (strain MIT 9211), this protein is Octanoyltransferase.